Here is a 316-residue protein sequence, read N- to C-terminus: Methionyl-tRNA formyltransferase (316 aa).

Position 109–112 (109–112 (SALP)) interacts with (6S)-5,6,7,8-tetrahydrofolate.

Belongs to the Fmt family.

The enzyme catalyses L-methionyl-tRNA(fMet) + (6R)-10-formyltetrahydrofolate = N-formyl-L-methionyl-tRNA(fMet) + (6S)-5,6,7,8-tetrahydrofolate + H(+). In terms of biological role, attaches a formyl group to the free amino group of methionyl-tRNA(fMet). The formyl group appears to play a dual role in the initiator identity of N-formylmethionyl-tRNA by promoting its recognition by IF2 and preventing the misappropriation of this tRNA by the elongation apparatus. This chain is Methionyl-tRNA formyltransferase, found in Nocardioides sp. (strain ATCC BAA-499 / JS614).